Consider the following 330-residue polypeptide: MALTASVKEELAHLQVRKSAVRAAELSALLRFAGGLHIVAGRIVVEAELDTESVARRAVRTVGEVFGHECELGVMSGGGLRREPTWVVRVARDGEALARRTGLLDAHGRPVRGLPPTVVNGSVDESAAVIRGAFLAHGSLTEPGRAAAMEFTCPGPEAALALVGSARRLDVLAKARQVRGVDRVVVRDGDTIAALLTRLGAHRALLQWEDRRMRKEVRATANRLANFDDANLRRSAQAAVTAGAKVERALDILGDEAPEHLRAAGRLRVANKQASLDELGRLSDPPLTKDAIAGRIRRLLAMADRRAEELGIATTTEFAAQAGGAQARAH.

Residues 275–308 constitute a DNA-binding region (H-T-H motif); that stretch reads SLDELGRLSDPPLTKDAIAGRIRRLLAMADRRAE.

This sequence belongs to the WhiA family.

Functionally, involved in cell division and chromosome segregation. This is Probable cell division protein WhiA from Kocuria rhizophila (strain ATCC 9341 / DSM 348 / NBRC 103217 / DC2201).